The following is a 446-amino-acid chain: Glutamyl-tRNA reductase 2 (446 aa).

Residues Thr53–Arg56, Ser105, Glu110–Gln112, and Gln116 contribute to the substrate site. Cys54 (nucleophile) is an active-site residue. Gly185 to Gly190 provides a ligand contact to NADP(+). The segment at Ala409–Thr446 is disordered. The segment covering Gly431–Pro440 has biased composition (low complexity).

Belongs to the glutamyl-tRNA reductase family. In terms of assembly, homodimer.

The enzyme catalyses (S)-4-amino-5-oxopentanoate + tRNA(Glu) + NADP(+) = L-glutamyl-tRNA(Glu) + NADPH + H(+). It functions in the pathway porphyrin-containing compound metabolism; protoporphyrin-IX biosynthesis; 5-aminolevulinate from L-glutamyl-tRNA(Glu): step 1/2. In terms of biological role, catalyzes the NADPH-dependent reduction of glutamyl-tRNA(Glu) to glutamate 1-semialdehyde (GSA). The chain is Glutamyl-tRNA reductase 2 from Anaeromyxobacter dehalogenans (strain 2CP-C).